The primary structure comprises 1201 residues: DNA-directed RNA polymerase subunit beta (1201 aa).

The interval Asp1165–Gln1201 is disordered. The span at Gln1172–Lys1189 shows a compositional bias: basic and acidic residues. A compositionally biased stretch (polar residues) spans Ser1191–Gln1201.

It belongs to the RNA polymerase beta chain family. As to quaternary structure, the RNAP catalytic core consists of 2 alpha, 1 beta, 1 beta' and 1 omega subunit. When a sigma factor is associated with the core the holoenzyme is formed, which can initiate transcription.

The catalysed reaction is RNA(n) + a ribonucleoside 5'-triphosphate = RNA(n+1) + diphosphate. Functionally, DNA-dependent RNA polymerase catalyzes the transcription of DNA into RNA using the four ribonucleoside triphosphates as substrates. The chain is DNA-directed RNA polymerase subunit beta from Lactiplantibacillus plantarum (strain ATCC BAA-793 / NCIMB 8826 / WCFS1) (Lactobacillus plantarum).